Here is a 149-residue protein sequence, read N- to C-terminus: Small ribosomal subunit protein uS15 (149 aa).

Positions 1–11 (MARMHSRDRGK) are enriched in basic and acidic residues. The disordered stretch occupies residues 1–25 (MARMHSRDRGKSGSTRPPRVAPPSW).

Belongs to the universal ribosomal protein uS15 family. In terms of assembly, part of the 30S ribosomal subunit.

This Methanopyrus kandleri (strain AV19 / DSM 6324 / JCM 9639 / NBRC 100938) protein is Small ribosomal subunit protein uS15.